A 315-amino-acid polypeptide reads, in one-letter code: Cross-pathway control WD-repeat protein 2 (315 aa).

WD repeat units follow at residues 14 to 54 (GHKG…DSYG), 62 to 101 (GHNHFVSDVVISSDGQFALSSSWDHTLRLWDLNTGATTRR), 104 to 144 (GHTS…YDIK), 147 to 188 (CHTE…LKTN), 191 to 230 (GHTGYINTVSVSPDGSLAASGGKDGITMLWDLNEGKHLYS), 232 to 270 (EAGDIVNALVFSPNRYWLCAATASCVKIFDLESKSIVDE), and 282 to 315 (GRQPECVSIAWSADGQTLFAGFTDNQLRVWTVTS).

It belongs to the WD repeat G protein beta family. Ribosomal protein RACK1 subfamily.

Component of the ribosome, a large ribonucleoprotein complex responsible for the synthesis of proteins in the cell. The small ribosomal subunit (SSU) binds messenger RNAs (mRNAs) and translates the encoded message by selecting cognate aminoacyl-transfer RNA (tRNA) molecules. The large subunit (LSU) contains the ribosomal catalytic site termed the peptidyl transferase center (PTC), which catalyzes the formation of peptide bonds, thereby polymerizing the amino acids delivered by tRNAs into a polypeptide chain. The nascent polypeptides leave the ribosome through a tunnel in the LSU and interact with protein factors that function in enzymatic processing, targeting, and the membrane insertion of nascent chains at the exit of the ribosomal tunnel. Plays in important role in the regulation of vegetative growth and fruiting body development. Especially, positively regulates the expression of genes involved in fruiting body development such as FVFD30 and FVFD16, as well as genes encoding for lectins and hydrophobins. Also regulates the expression of genes involved in cAMP signaling pathway. This Flammulina velutipes (Agaricus velutipes) protein is Cross-pathway control WD-repeat protein 2.